The sequence spans 103 residues: MHVKKGDKVMVISGKDKGKQGVILAAFPKKDRVIVEGVNMVKKHSKPTQANPQGGILNQEAPIHVSNVMPLDPKTGEVTRVGYKVENGKKVRIAKKSGQVLDN.

This sequence belongs to the universal ribosomal protein uL24 family. In terms of assembly, part of the 50S ribosomal subunit.

One of two assembly initiator proteins, it binds directly to the 5'-end of the 23S rRNA, where it nucleates assembly of the 50S subunit. Its function is as follows. One of the proteins that surrounds the polypeptide exit tunnel on the outside of the subunit. This is Large ribosomal subunit protein uL24 from Bacillus licheniformis (strain ATCC 14580 / DSM 13 / JCM 2505 / CCUG 7422 / NBRC 12200 / NCIMB 9375 / NCTC 10341 / NRRL NRS-1264 / Gibson 46).